A 289-amino-acid polypeptide reads, in one-letter code: Glycerol facilitator-aquaporin gla (289 aa).

The next 2 membrane-spanning stretches (helical) occupy residues 10-30 and 41-61; these read ITEFVGTALLIIMGNGAVANV and SWMIIGWGYGLGVMLPAVAFG. An NPA 1 motif is present at residues 68–70; that stretch reads NPA. The next 3 membrane-spanning stretches (helical) occupy residues 87-107, 151-171, and 209-229; these read AQYIIAQVLGAMFGQLLIVMV, FLGSFVLFFGAVAATNIFFGS, and MIAHLFLGFLVMGLVVALGGP. The NPA 2 motif lies at 235–237; it reads NPA. Residues 264–284 form a helical membrane-spanning segment; it reads WYAWVPVLAPILASLAAVALF.

It belongs to the MIP/aquaporin (TC 1.A.8) family.

The protein localises to the cell membrane. Mixed channel protein that transports both water and glycerol. The sequence is that of Glycerol facilitator-aquaporin gla (gla) from Lactococcus lactis subsp. cremoris (Streptococcus cremoris).